A 153-amino-acid polypeptide reads, in one-letter code: 3-hydroxyacyl-[acyl-carrier-protein] dehydratase FabZ (153 aa).

Residue His-53 is part of the active site.

Belongs to the thioester dehydratase family. FabZ subfamily.

It localises to the cytoplasm. It catalyses the reaction a (3R)-hydroxyacyl-[ACP] = a (2E)-enoyl-[ACP] + H2O. Functionally, involved in unsaturated fatty acids biosynthesis. Catalyzes the dehydration of short chain beta-hydroxyacyl-ACPs and long chain saturated and unsaturated beta-hydroxyacyl-ACPs. The polypeptide is 3-hydroxyacyl-[acyl-carrier-protein] dehydratase FabZ (Lawsonia intracellularis (strain PHE/MN1-00)).